A 694-amino-acid chain; its full sequence is Elongation factor G (694 aa).

A tr-type G domain is found at 9-288; the sequence is SKIRNIGIMA…VIVKWLPSPK (280 aa). GTP is bound by residues 18 to 25, 82 to 86, and 136 to 139; these read AHIDAGKT, DTPGH, and NKMD.

The protein belongs to the TRAFAC class translation factor GTPase superfamily. Classic translation factor GTPase family. EF-G/EF-2 subfamily.

The protein localises to the cytoplasm. In terms of biological role, catalyzes the GTP-dependent ribosomal translocation step during translation elongation. During this step, the ribosome changes from the pre-translocational (PRE) to the post-translocational (POST) state as the newly formed A-site-bound peptidyl-tRNA and P-site-bound deacylated tRNA move to the P and E sites, respectively. Catalyzes the coordinated movement of the two tRNA molecules, the mRNA and conformational changes in the ribosome. In Chlamydia caviae (strain ATCC VR-813 / DSM 19441 / 03DC25 / GPIC) (Chlamydophila caviae), this protein is Elongation factor G.